A 681-amino-acid chain; its full sequence is Secretion system apparatus protein SsaV (681 aa).

A run of 7 helical transmembrane segments spans residues 24–44 (MVLA…LPTW), 48–68 (ILIT…IYLS), 73–93 (LSVF…LTIS), 118–138 (GNLT…FIVI), 206–226 (TIAG…IAIV), 244–264 (IGDG…AGII), and 295–315 (AVVL…LAFF).

It belongs to the FHIPEP (flagella/HR/invasion proteins export pore) family.

The protein localises to the cell inner membrane. In terms of biological role, component of Salmonella pathogenicity island 2 (SPI-2) type III secretion system, required for secretion of some type III-secreted effectors including the SpvB exotoxin. In Salmonella typhimurium (strain 14028s / SGSC 2262), this protein is Secretion system apparatus protein SsaV (ssaV).